A 166-amino-acid polypeptide reads, in one-letter code: Thioredoxin, mitochondrial (166 aa).

The N-terminal 59 residues, 1-59 (MAQRLLLGRFLTSVISRKPPQGVWASLTSKTLQTPQYNAGGLTVMPSPARTVHTTRVCL), are a transit peptide targeting the mitochondrion. The region spanning 61 to 166 (TFNVQDGPDF…LEAFLKKLIG (106 aa)) is the Thioredoxin domain. Active-site nucleophile residues include cysteine 90 and cysteine 93. A disulfide bridge links cysteine 90 with cysteine 93. Lysine 152 is modified (N6-acetyllysine; alternate). An N6-succinyllysine; alternate modification is found at lysine 152.

This sequence belongs to the thioredoxin family. Monomer.

Its subcellular location is the mitochondrion. Its function is as follows. Important for the control of mitochondrial reactive oxygen species homeostasis, apoptosis regulation and cell viability. Is involved in various redox reactions including the reduction of protein disulfide bonds, through the reversible oxidation of its active center dithiol to a disulfide. This is Thioredoxin, mitochondrial (Txn2) from Mus musculus (Mouse).